Consider the following 192-residue polypeptide: Signal peptidase complex catalytic subunit SEC11C (192 aa).

Topologically, residues 1–28 are cytoplasmic; sequence MVRAGAVGAHLPASGLDIFGDLKKMNKR. The helical; Signal-anchor for type II membrane protein transmembrane segment at 29–48 threads the bilayer; that stretch reads QLYYQVLNFAMIVSSALMIW. Over 49 to 192 the chain is Lumenal; it reads KGLIVLTGSE…GAYVLLKRES (144 aa). Residues Ser68, His108, and Asp134 each act as charge relay system in the active site. The tract at residues 177 to 188 is C-terminal short (CTS) helix; sequence ALLAVMGAYVLL.

Belongs to the peptidase S26B family. In terms of assembly, component of the signal peptidase complex paralog C (SPC-C) composed of a catalytic subunit SEC11C and three accessory subunits SPCS1, SPCS2 and SPCS3. Within the complex, interacts with SPCS2 and SPCS3. The complex induces a local thinning of the ER membrane which is used to measure the length of the signal peptide (SP) h-region of protein substrates. This ensures the selectivity of the complex towards h-regions shorter than 18-20 amino acids. In terms of processing, may undergo processing at the N-terminus.

The protein localises to the endoplasmic reticulum membrane. It catalyses the reaction Cleavage of hydrophobic, N-terminal signal or leader sequences from secreted and periplasmic proteins.. Catalytic component of the signal peptidase complex (SPC) which catalyzes the cleavage of N-terminal signal sequences from nascent proteins as they are translocated into the lumen of the endoplasmic reticulum. Specifically cleaves N-terminal signal peptides that contain a hydrophobic alpha-helix (h-region) shorter than 18-20 amino acids. The protein is Signal peptidase complex catalytic subunit SEC11C (SEC11C) of Homo sapiens (Human).